Here is a 388-residue protein sequence, read N- to C-terminus: ATP phosphoribosyltransferase regulatory subunit (388 aa).

It belongs to the class-II aminoacyl-tRNA synthetase family. HisZ subfamily. Heteromultimer composed of HisG and HisZ subunits.

It is found in the cytoplasm. Its pathway is amino-acid biosynthesis; L-histidine biosynthesis; L-histidine from 5-phospho-alpha-D-ribose 1-diphosphate: step 1/9. Required for the first step of histidine biosynthesis. May allow the feedback regulation of ATP phosphoribosyltransferase activity by histidine. The polypeptide is ATP phosphoribosyltransferase regulatory subunit (Acinetobacter baumannii (strain SDF)).